Reading from the N-terminus, the 378-residue chain is Probable pectin lyase A (378 aa).

A signal peptide spans 1-19; it reads MKFPAFITAIISIASLSSA. 2 disulfide bridges follow: Cys82–Cys101 and Cys91–Cys225. Residue Arg255 is part of the active site. Cysteines 321 and 329 form a disulfide.

It belongs to the polysaccharide lyase 1 family.

Its subcellular location is the secreted. The enzyme catalyses Eliminative cleavage of (1-&gt;4)-alpha-D-galacturonan methyl ester to give oligosaccharides with 4-deoxy-6-O-methyl-alpha-D-galact-4-enuronosyl groups at their non-reducing ends.. Functionally, pectinolytic enzymes consist of four classes of enzymes: pectin lyase, polygalacturonase, pectin methylesterase and rhamnogalacturonase. Among pectinolytic enzymes, pectin lyase is the most important in depolymerization of pectin, since it cleaves internal glycosidic bonds of highly methylated pectins. In Aspergillus terreus (strain NIH 2624 / FGSC A1156), this protein is Probable pectin lyase A (pelA).